A 274-amino-acid chain; its full sequence is Diaminopimelate epimerase (274 aa).

3 residues coordinate substrate: N13, Q47, and N65. The Proton donor role is filled by C74. Substrate is bound by residues 75-76, N149, N182, and 200-201; these read GN and ER. C209 serves as the catalytic Proton acceptor. 210-211 serves as a coordination point for substrate; it reads GT.

This sequence belongs to the diaminopimelate epimerase family. Homodimer.

The protein localises to the cytoplasm. The enzyme catalyses (2S,6S)-2,6-diaminopimelate = meso-2,6-diaminopimelate. Its pathway is amino-acid biosynthesis; L-lysine biosynthesis via DAP pathway; DL-2,6-diaminopimelate from LL-2,6-diaminopimelate: step 1/1. Functionally, catalyzes the stereoinversion of LL-2,6-diaminopimelate (L,L-DAP) to meso-diaminopimelate (meso-DAP), a precursor of L-lysine and an essential component of the bacterial peptidoglycan. The protein is Diaminopimelate epimerase of Rhizorhabdus wittichii (strain DSM 6014 / CCUG 31198 / JCM 15750 / NBRC 105917 / EY 4224 / RW1) (Sphingomonas wittichii).